Consider the following 120-residue polypeptide: Large ribosomal subunit protein bL20 (120 aa).

The protein belongs to the bacterial ribosomal protein bL20 family.

Binds directly to 23S ribosomal RNA and is necessary for the in vitro assembly process of the 50S ribosomal subunit. It is not involved in the protein synthesizing functions of that subunit. The sequence is that of Large ribosomal subunit protein bL20 from Ureaplasma parvum serovar 3 (strain ATCC 27815 / 27 / NCTC 11736).